The primary structure comprises 355 residues: Holliday junction branch migration complex subunit RuvB (355 aa).

Residues 1-43 (MEEMDDFTVRRGEREDITGAAGPPEERPLDPAAFEEDDEPTLR) are disordered. Residues 4–203 (MDDFTVRRGE…FGFSARLDYY (200 aa)) form a large ATPase domain (RuvB-L) region. A compositionally biased stretch (basic and acidic residues) spans 7 to 17 (FTVRRGEREDI). ATP is bound by residues leucine 42, arginine 43, glycine 84, lysine 87, threonine 88, serine 89, 150-152 (EDF), arginine 193, tyrosine 203, and arginine 240. Mg(2+) is bound at residue threonine 88. Residues 204–274 (EPHELEKIVV…TANAALEMQG (71 aa)) are small ATPAse domain (RuvB-S). The interval 277 to 355 (HLGLDRTDRE…HLGFPVRDGG (79 aa)) is head domain (RuvB-H). DNA contacts are provided by arginine 313, arginine 332, and arginine 337.

Belongs to the RuvB family. In terms of assembly, homohexamer. Forms an RuvA(8)-RuvB(12)-Holliday junction (HJ) complex. HJ DNA is sandwiched between 2 RuvA tetramers; dsDNA enters through RuvA and exits via RuvB. An RuvB hexamer assembles on each DNA strand where it exits the tetramer. Each RuvB hexamer is contacted by two RuvA subunits (via domain III) on 2 adjacent RuvB subunits; this complex drives branch migration. In the full resolvosome a probable DNA-RuvA(4)-RuvB(12)-RuvC(2) complex forms which resolves the HJ.

It localises to the cytoplasm. The catalysed reaction is ATP + H2O = ADP + phosphate + H(+). Functionally, the RuvA-RuvB-RuvC complex processes Holliday junction (HJ) DNA during genetic recombination and DNA repair, while the RuvA-RuvB complex plays an important role in the rescue of blocked DNA replication forks via replication fork reversal (RFR). RuvA specifically binds to HJ cruciform DNA, conferring on it an open structure. The RuvB hexamer acts as an ATP-dependent pump, pulling dsDNA into and through the RuvAB complex. RuvB forms 2 homohexamers on either side of HJ DNA bound by 1 or 2 RuvA tetramers; 4 subunits per hexamer contact DNA at a time. Coordinated motions by a converter formed by DNA-disengaged RuvB subunits stimulates ATP hydrolysis and nucleotide exchange. Immobilization of the converter enables RuvB to convert the ATP-contained energy into a lever motion, pulling 2 nucleotides of DNA out of the RuvA tetramer per ATP hydrolyzed, thus driving DNA branch migration. The RuvB motors rotate together with the DNA substrate, which together with the progressing nucleotide cycle form the mechanistic basis for DNA recombination by continuous HJ branch migration. Branch migration allows RuvC to scan DNA until it finds its consensus sequence, where it cleaves and resolves cruciform DNA. The chain is Holliday junction branch migration complex subunit RuvB from Rubrobacter xylanophilus (strain DSM 9941 / JCM 11954 / NBRC 16129 / PRD-1).